The following is a 173-amino-acid chain: MSLCRQNYHEECEAGVNKQINMELYASYVYMTMAFHFNRDDVALNGFYKFFLNESEEERQHAIKLMTYQNMRGGRIVLQDISAPPQLSWNSGLHAMQDALDLEKKVNQSLMELVAVGERHRDTHFCDFINNEYLEIQVQSMKKLSDYITNLIRVGNGLGEYTFDKETLHGESQ.

A Ferritin-like diiron domain is found at 6–155 (QNYHEECEAG…DYITNLIRVG (150 aa)). Residues Glu-23, Glu-58, His-61, Glu-103, and Gln-137 each coordinate Fe cation.

This sequence belongs to the ferritin family. As to quaternary structure, oligomer of 24 subunits. The functional molecule forms a roughly spherical shell with a diameter of 12 nm and contains a central cavity into which the insoluble mineral iron core is deposited.

It catalyses the reaction 4 Fe(2+) + O2 + 4 H(+) = 4 Fe(3+) + 2 H2O. Its function is as follows. Stores iron in a soluble, non-toxic, readily available form. Important for iron homeostasis. Has ferroxidase activity. Iron is taken up in the ferrous form and deposited as ferric hydroxides after oxidation. This chain is Ferritin-1 heavy chain (SCM-1), found in Schistosoma mansoni (Blood fluke).